We begin with the raw amino-acid sequence, 715 residues long: Methionine--tRNA ligase (715 aa).

The 'HIGH' region motif lies at 17–27 (PYANGPIHLGH). Residues C148, C151, C161, and C164 each contribute to the Zn(2+) site. Positions 359–363 (KMSKS) match the 'KMSKS' region motif. K362 is an ATP binding site. The region spanning 614-715 (DLSKVELRVG…KDAKPGDRLK (102 aa)) is the tRNA-binding domain.

Belongs to the class-I aminoacyl-tRNA synthetase family. MetG type 1 subfamily. In terms of assembly, homodimer. Requires Zn(2+) as cofactor.

Its subcellular location is the cytoplasm. It catalyses the reaction tRNA(Met) + L-methionine + ATP = L-methionyl-tRNA(Met) + AMP + diphosphate. Its function is as follows. Is required not only for elongation of protein synthesis but also for the initiation of all mRNA translation through initiator tRNA(fMet) aminoacylation. The protein is Methionine--tRNA ligase of Leptospira interrogans serogroup Icterohaemorrhagiae serovar Lai (strain 56601).